Consider the following 374-residue polypeptide: Serine/threonine-protein kinase-transforming protein mos (374 aa).

Residues 94 to 370 form the Protein kinase domain; the sequence is VCLMHRLGSG…LLQRDLKAFR (277 aa). Residues 100–108 and Lys-121 contribute to the ATP site; that span reads LGSGGFGSV. Asp-229 functions as the Proton acceptor in the catalytic mechanism.

This sequence belongs to the protein kinase superfamily. Ser/Thr protein kinase family.

The catalysed reaction is L-seryl-[protein] + ATP = O-phospho-L-seryl-[protein] + ADP + H(+). It catalyses the reaction L-threonyl-[protein] + ATP = O-phospho-L-threonyl-[protein] + ADP + H(+). This chain is Serine/threonine-protein kinase-transforming protein mos (V-MOS), found in Mus musculus (Mouse).